Reading from the N-terminus, the 594-residue chain is Glomulin (594 aa).

Ala-2 carries the post-translational modification N-acetylalanine. Positions 2–553 are alpha-helical region with structural similarity to HEAT repeats; the sequence is AVEELQSIIK…EEIPNMPPEM (552 aa). Residues 300–594 are important for interaction with RBX1; the sequence is IDQLPMVLSP…STSEENIGIK (295 aa).

As to quaternary structure, interacts with FKBP4 and FKBP1A. Isoform 1: Interacts with RBX1 (via RING domain). Identified in complexes that contain RBX1 plus one of the cullins CUL1, CUL2, CUL3, and CUL4A. Identified in a SCF complex composed of CUL1, RBX1, SKP1, FBXW7 and GLMN. Component of a SCF-like complex consisting of CUL7, RBX1, SKP1, FBXW8 and GLMN. Interacts with unphosphorylated MET and is released upon MET phosphorylation. In terms of processing, phosphorylated on tyrosine residues. Ubiquitous.

Functionally, regulatory component of cullin-RING-based SCF (SKP1-Cullin-F-box protein) E3 ubiquitin-protein ligase complexes. Inhibits E3 ubiquitin ligase activity by binding to RBX1 (via RING domain) and inhibiting its interaction with the E2 ubiquitin-conjugating enzyme CDC34. Inhibits RBX1-mediated neddylation of CUL1. Required for normal stability and normal cellular levels of key components of SCF ubiquitin ligase complexes, including FBXW7, RBX1, CUL1, CUL2, CUL3, CUL4A, and thereby contributes to the regulation of CCNE1 and MYC levels. Essential for normal development of the vasculature. Contributes to the regulation of RPS6KB1 phosphorylation. This Homo sapiens (Human) protein is Glomulin (GLMN).